A 204-amino-acid chain; its full sequence is Ribonuclease HII (204 aa).

Residues 17-204 enclose the RNase H type-2 domain; sequence QLVAGVDEVG…KPVQQLLQGD (188 aa). Positions 23, 24, and 115 each coordinate a divalent metal cation.

Belongs to the RNase HII family. Requires Mn(2+) as cofactor. Mg(2+) serves as cofactor.

Its subcellular location is the cytoplasm. It carries out the reaction Endonucleolytic cleavage to 5'-phosphomonoester.. Functionally, endonuclease that specifically degrades the RNA of RNA-DNA hybrids. This Hahella chejuensis (strain KCTC 2396) protein is Ribonuclease HII.